The primary structure comprises 950 residues: Protocadherin alpha-6 (950 aa).

Residues 1-29 form the signal peptide; sequence MVFTPEDRLGKQCLLLPLLLLAAWKVGSG. Residues 30–697 are Extracellular-facing; it reads QLHYSVPEEA…GPEAALVDVN (668 aa). Cadherin domains are found at residues 34 to 133, 157 to 242, 243 to 350, 351 to 455, 456 to 565, and 581 to 678; these read SVPE…PPLF, ASDA…APNF, EQSE…VPEI, ALTS…APAF, AQPE…APAL, and VPRS…APKA. 4 N-linked (GlcNAc...) asparagine glycosylation sites follow: Asn-257, Asn-265, Asn-386, and Asn-548. Residues 698–718 traverse the membrane as a helical segment; it reads VYLIIAICAVSSLLVLTLLLY. At 719 to 950 the chain is on the cytoplasmic side; the sequence is TALRCSAPST…GNSTTDNSDQ (232 aa). PXXP repeat units follow at residues 799 to 802, 832 to 835, 873 to 876, and 891 to 894; these read PRQP, PGGP, PGNP, and PGSP. Residues 799–894 form a 4 X 4 AA repeats of P-X-X-P region; that stretch reads PRQPNPDWRY…PDKFIIPGSP (96 aa). The disordered stretch occupies residues 830 to 889; it reads AGPGGPDQQWPTVSSATPEPEAGEVSPPVGAGVNSNSWTFKYGPGNPKQSGPGELPDKFI. The segment at 901–950 is disordered; sequence QEPANSQIDKSDFITFGKKEETKKKKKKKKGNKTQEKKEKGNSTTDNSDQ. Residues 909-923 are compositionally biased toward basic and acidic residues; the sequence is DKSDFITFGKKEETK.

It is found in the cell membrane. Functionally, potential calcium-dependent cell-adhesion protein. May be involved in the establishment and maintenance of specific neuronal connections in the brain. The chain is Protocadherin alpha-6 (PCDHA6) from Pan troglodytes (Chimpanzee).